Consider the following 116-residue polypeptide: Endoribonuclease toxin ChpB (116 aa).

This sequence belongs to the PemK/MazF family. As to quaternary structure, homodimer, interacts with ChpS, which inhibits the endoribonuclease activity.

Its activity is regulated as follows. Stimulated in vitro in a concentration-dependent fashion by extracellular death factor (EDF, a quorum sensing pentapeptide sequence NNWNN, probably produced from the zwf gene product glucose-6-phosphate 1-dehydrogenase), which is able to overcome inhibition by cognate antitoxin ChpS. Its function is as follows. Toxic component of a type II toxin-antitoxin (TA) system. ChpB is a sequence-specific mRNA and (weak) tmRNA endoribonuclease that inhibits protein synthesis and induces bacterial stasis. Cleavage is independent of the ribosome. Cleavage occurs at ACY sequences where Y is not C. The endoribonuclease activity is not as strong as that of MazF. The endoribonuclease activity (a toxin) is inhibited by its labile cognate antitoxin ChpS. Toxicity results when the levels of ChpS decrease in the cell, leading to mRNA degradation. Both ChpS and ChpB probably bind to the promoter region of the chpS-chpB operon to autoregulate their synthesis. In Escherichia coli (strain K12), this protein is Endoribonuclease toxin ChpB (chpB).